The following is a 277-amino-acid chain: 3-methyl-2-oxobutanoate hydroxymethyltransferase (277 aa).

The Mg(2+) site is built by D58 and D97. Residues 58–59 (DS), D97, and K127 contribute to the 3-methyl-2-oxobutanoate site. Residue E129 participates in Mg(2+) binding. Residue E195 is the Proton acceptor of the active site.

Belongs to the PanB family. In terms of assembly, homodecamer; pentamer of dimers. Requires Mg(2+) as cofactor.

It is found in the cytoplasm. The catalysed reaction is 3-methyl-2-oxobutanoate + (6R)-5,10-methylene-5,6,7,8-tetrahydrofolate + H2O = 2-dehydropantoate + (6S)-5,6,7,8-tetrahydrofolate. The protein operates within cofactor biosynthesis; (R)-pantothenate biosynthesis; (R)-pantoate from 3-methyl-2-oxobutanoate: step 1/2. Functionally, catalyzes the reversible reaction in which hydroxymethyl group from 5,10-methylenetetrahydrofolate is transferred onto alpha-ketoisovalerate to form ketopantoate. The protein is 3-methyl-2-oxobutanoate hydroxymethyltransferase of Leifsonia xyli subsp. xyli (strain CTCB07).